A 320-amino-acid chain; its full sequence is Ferrochelatase (320 aa).

Fe cation contacts are provided by His-194 and Glu-275.

It belongs to the ferrochelatase family. As to quaternary structure, monomer.

Its subcellular location is the cytoplasm. It catalyses the reaction heme b + 2 H(+) = protoporphyrin IX + Fe(2+). Its pathway is porphyrin-containing compound metabolism; protoheme biosynthesis; protoheme from protoporphyrin-IX: step 1/1. In terms of biological role, catalyzes the ferrous insertion into protoporphyrin IX. The chain is Ferrochelatase from Escherichia coli O8 (strain IAI1).